The primary structure comprises 72 residues: Cytotoxin 9 (72 aa).

The first 12 residues, 1-12 (VVTIVCLDLGYT), serve as a signal peptide directing secretion. 4 disulfide bridges follow: Cys-15/Cys-33, Cys-26/Cys-50, Cys-54/Cys-65, and Cys-66/Cys-71.

It belongs to the three-finger toxin family. Short-chain subfamily. Type IA cytotoxin sub-subfamily. As to quaternary structure, monomer in solution; Homodimer and oligomer in the presence of negatively charged lipids forming a pore with a size ranging between 20 and 30 Angstroms. As to expression, expressed by the venom gland.

It localises to the secreted. Its function is as follows. Shows cytolytic activity on many different cells by forming a pore in lipid membranes. In vivo, increases heart rate or kills the animal by cardiac arrest. In addition, it binds to heparin with high affinity, interacts with Kv channel-interacting protein 1 (KCNIP1) in a calcium-independent manner, and binds to integrin alpha-V/beta-3 (ITGAV/ITGB3) with moderate affinity. Preferentially binds acidic phospholipids like phosphatidylserine, phosphatidic acid and phosphatidyl glycerol. Has hemolytic activity towards human erythrocytes (EC(50)=0.171 uM) and cytolytic activity towards various cell lines. This Naja naja (Indian cobra) protein is Cytotoxin 9.